The primary structure comprises 1484 residues: Chromosome partition protein MukB (1484 aa).

34-41 is a binding site for ATP; that stretch reads GGNGAGKS. Coiled-coil stretches lie at residues 326 to 418, 444 to 472, and 509 to 602; these read LEAD…QYNQ, LDTFQAKEQEATEKLLSLEQKMSVAQTAH, and RHLA…QRAP. The tract at residues 666–783 is flexible hinge; sequence PGGAEDQRLN…SLPIFGRAAR (118 aa). 3 coiled-coil regions span residues 835–923, 977–1116, and 1209–1265; these read EAEI…AKLE, EMLS…AKAG, and VEAI…LQSV. Residues 1049 to 1074 are disordered; that stretch reads ADSGAEERARQRRDELHAQLSNNRSR. Basic and acidic residues predominate over residues 1051–1065; it reads SGAEERARQRRDELH.

This sequence belongs to the SMC family. MukB subfamily. As to quaternary structure, homodimerization via its hinge domain. Binds to DNA via its C-terminal region. Interacts, and probably forms a ternary complex, with MukE and MukF via its C-terminal region. The complex formation is stimulated by calcium or magnesium. Interacts with tubulin-related protein FtsZ.

It is found in the cytoplasm. Its subcellular location is the nucleoid. Functionally, plays a central role in chromosome condensation, segregation and cell cycle progression. Functions as a homodimer, which is essential for chromosome partition. Involved in negative DNA supercoiling in vivo, and by this means organize and compact chromosomes. May achieve or facilitate chromosome segregation by condensation DNA from both sides of a centrally located replisome during cell division. This Salmonella dublin (strain CT_02021853) protein is Chromosome partition protein MukB.